A 207-amino-acid polypeptide reads, in one-letter code: Ras-related protein rab7 (207 aa).

Residues 15-22 (GDSGVGKT), 34-40 (SNQYKAT), 63-67 (DTAGQ), 125-128 (NKID), and 156-157 (AK) each bind GTP. The short motif at 37–45 (YKATIGADF) is the Effector region element. 2 S-geranylgeranyl cysteine lipidation sites follow: Cys205 and Cys207. Cys207 is subject to Cysteine methyl ester.

This sequence belongs to the small GTPase superfamily. Rab family. (Microbial infection) Interacts with Singapore grouper iridoviral proteins VP69 (ORF69) and VP101 (ORF101). Ubiquitously expressed. Expressed in liver, spleen, kidney, brain, intestine, heart, skin, muscle, gill and stomach.

The protein resides in the late endosome membrane. It is found in the lysosome membrane. Its function is as follows. Key regulator in endo-lysosomal trafficking. Governs early-to-late endosomal maturation, microtubule minus-end as well as plus-end directed endosomal migration and positioning, and endosome-lysosome transport through different protein-protein interaction cascades. Plays important roles in microbial pathogen infection and survival, as well as in participating in the life cycle of viruses. The polypeptide is Ras-related protein rab7 (Epinephelus coioides (Orange-spotted grouper)).